A 142-amino-acid polypeptide reads, in one-letter code: Large ribosomal subunit protein bL27m (142 aa).

Residues 27–48 (TKKSAGSTKNGRTSQPKNLGLK) are disordered. Polar residues predominate over residues 30–43 (SAGSTKNGRTSQPK).

This sequence belongs to the bacterial ribosomal protein bL27 family.

The protein localises to the mitochondrion. In Dictyostelium discoideum (Social amoeba), this protein is Large ribosomal subunit protein bL27m (mrpl27).